A 227-amino-acid chain; its full sequence is Cytidylate kinase (227 aa).

12–20 is a binding site for ATP; sequence GPSGAGKGT.

Belongs to the cytidylate kinase family. Type 1 subfamily.

It is found in the cytoplasm. It carries out the reaction CMP + ATP = CDP + ADP. The catalysed reaction is dCMP + ATP = dCDP + ADP. The chain is Cytidylate kinase from Erwinia tasmaniensis (strain DSM 17950 / CFBP 7177 / CIP 109463 / NCPPB 4357 / Et1/99).